The following is a 396-amino-acid chain: 1-deoxy-D-xylulose 5-phosphate reductoisomerase (396 aa).

6 residues coordinate NADPH: T17, G18, S19, I20, N47, and N130. A 1-deoxy-D-xylulose 5-phosphate-binding site is contributed by K131. E132 is a binding site for NADPH. D156 is a Mn(2+) binding site. 1-deoxy-D-xylulose 5-phosphate is bound by residues S157, E158, S182, and H205. Mn(2+) is bound at residue E158. Position 211 (G211) interacts with NADPH. 1-deoxy-D-xylulose 5-phosphate-binding residues include S218, N223, K224, and E227. E227 is a binding site for Mn(2+).

Belongs to the DXR family. Mg(2+) serves as cofactor. It depends on Mn(2+) as a cofactor.

It carries out the reaction 2-C-methyl-D-erythritol 4-phosphate + NADP(+) = 1-deoxy-D-xylulose 5-phosphate + NADPH + H(+). It participates in isoprenoid biosynthesis; isopentenyl diphosphate biosynthesis via DXP pathway; isopentenyl diphosphate from 1-deoxy-D-xylulose 5-phosphate: step 1/6. Catalyzes the NADPH-dependent rearrangement and reduction of 1-deoxy-D-xylulose-5-phosphate (DXP) to 2-C-methyl-D-erythritol 4-phosphate (MEP). The chain is 1-deoxy-D-xylulose 5-phosphate reductoisomerase from Rhizobium etli (strain ATCC 51251 / DSM 11541 / JCM 21823 / NBRC 15573 / CFN 42).